A 217-amino-acid polypeptide reads, in one-letter code: Small ribosomal subunit protein uS3 (217 aa).

The KH type-2 domain occupies 40-110 (IRDLINKGFN…EVYINIHEVR (71 aa)).

It belongs to the universal ribosomal protein uS3 family. As to quaternary structure, part of the 30S ribosomal subunit. Forms a tight complex with proteins S10 and S14.

In terms of biological role, binds the lower part of the 30S subunit head. Binds mRNA in the 70S ribosome, positioning it for translation. The sequence is that of Small ribosomal subunit protein uS3 from Rickettsia akari (strain Hartford).